The sequence spans 186 residues: Ribosome-recycling factor (186 aa).

This sequence belongs to the RRF family.

It localises to the cytoplasm. Responsible for the release of ribosomes from messenger RNA at the termination of protein biosynthesis. May increase the efficiency of translation by recycling ribosomes from one round of translation to another. The chain is Ribosome-recycling factor from Bordetella petrii (strain ATCC BAA-461 / DSM 12804 / CCUG 43448).